Reading from the N-terminus, the 37-residue chain is Photosystem II reaction center protein Psb30 (37 aa).

Residues 10 to 30 (LISLLLLTLIMLAGPAVIALW) traverse the membrane as a helical segment.

It belongs to the Psb30/Ycf12 family. As to quaternary structure, PSII is composed of 1 copy each of membrane proteins PsbA, PsbB, PsbC, PsbD, PsbE, PsbF, PsbH, PsbI, PsbJ, PsbK, PsbL, PsbM, PsbT, PsbX, Psb30/Ycf12, peripheral proteins PsbO, CyanoQ (PsbQ), PsbU, PsbV and a large number of cofactors. It forms dimeric complexes.

It localises to the cell inner membrane. Its function is as follows. A core subunit of photosystem II (PSII), probably helps stabilize the reaction center. This is Photosystem II reaction center protein Psb30 from Gloeobacter violaceus (strain ATCC 29082 / PCC 7421).